Consider the following 190-residue polypeptide: Potassium-transporting ATPase KdpC subunit (190 aa).

Residues 10–30 form a helical membrane-spanning segment; sequence TFLFLLLITGGVYPLLTTALG.

It belongs to the KdpC family. In terms of assembly, the system is composed of three essential subunits: KdpA, KdpB and KdpC.

It localises to the cell inner membrane. Its function is as follows. Part of the high-affinity ATP-driven potassium transport (or Kdp) system, which catalyzes the hydrolysis of ATP coupled with the electrogenic transport of potassium into the cytoplasm. This subunit acts as a catalytic chaperone that increases the ATP-binding affinity of the ATP-hydrolyzing subunit KdpB by the formation of a transient KdpB/KdpC/ATP ternary complex. The polypeptide is Potassium-transporting ATPase KdpC subunit (Escherichia coli O127:H6 (strain E2348/69 / EPEC)).